Consider the following 244-residue polypeptide: Sperm-egg fusion protein Juno (244 aa).

The signal sequence occupies residues 1-19; sequence MAQWWQILLGLWAVLPTLA. 8 cysteine pairs are disulfide-bonded: Cys27/Cys55, Cys47/Cys95, Cys56/Cys99, Cys79/Cys166, Cys86/Cys137, Cys126/Cys200, Cys130/Cys180, and Cys143/Cys160. Residues 62 to 81 are important for interaction with IZUMO1; that stretch reads WEAHLEEPLLFNFSMMHCGL. Asn73 is a glycosylation site (N-linked (GlcNAc...) asparagine). The N-linked (GlcNAc...) asparagine glycan is linked to Asn185. Gly222 carries the GPI-anchor amidated glycine lipid modification. Positions 223–244 are excised as a propeptide; sequence SALAPQLSYTLPAFSLCLLFHP.

It belongs to the folate receptor family. In terms of assembly, monomer. Interacts with IZUMO1; the interaction is direct. IZUMO1 and IZUMO1R/JUNO form a complex with 1:1 stoichiometry. Interacts with WDR54. In terms of processing, the protein is rapidly cleaved following fertilization, being only weakly detectable in zona-intact fertilized eggs at telophase II and undetectable at the pronuclear stage. Sheding is probably required to block to polyspermy and ensuring egg fusion with a single sperm. As to expression, widely expressed with higher expression in thymus, spleen and lung. Present at the cell surface of unfertilized oocytes, while it is barely detectable 30 to 40 minutes after fertilization (at protein level).

Its subcellular location is the cell membrane. Receptor for IZUMO1 present at the cell surface of oocytes (oolemma), which is essential for species-specific gamete recognition and fertilization. The IZUMO1:IZUMO1R/JUNO interaction is a necessary adhesion event between sperm and egg that is required for fertilization but is not sufficient for cell fusion. The ligand-receptor interaction probably does not act as a membrane 'fusogen'. Does not bind folate. This Mus musculus (Mouse) protein is Sperm-egg fusion protein Juno.